The following is a 971-amino-acid chain: MSTSVSIATSSPVLTMNPIITEHDFRFPRRPSAWPGAAIHNAPTQRTXNSNRIPNSRDASASFKEHKTDMATTYSLARQGLGGSALFPFLQNGLADSDRSIDRMQQDDPLATQVWKFFARTKHQLPSQHRMENLTWRMMALNIRRHKEEQQQRQDEADARRKKNMDAGSRAFRLGRPMMQSSPSGIAQLRKSSENNLAQPDAMNLDDFIFSDNSGSPINFASPEGDKMVDDRSGSSMASAIPIKSRKEPSLQNFVPQSVPVQPAHQATQGSEFNYVNRHLRKTSIDDRRTRKRPANFSPQVPAVNSTAAQNDLDLDSELHDYSLDQPNQAGIPQQSNGSNVPFNIDTFMENDSMVNNGNFQQNFSFSPSTSPMIPHGPFSGMYHNSSVPSASMSNNNNNSDFYSPPASAYPSNVSTPHPVPEQEGFYFGSQDARTQRPQGFQQSIGSMLSQQFMYGGSNGNSGSTMFSAPGTASESMSAYSTAPSSFGHIDPSQVFQNEQAVTSPTIQMPQDNMFSFGADSDDEDNNAFADRNVSMQKDMSSSLDESGAMGWDASLPGQFSTQAARFPGGPTRKQVMIGGTTTDFVDNNGDWESNGLERSQSQSFRGGNLRRQHPKLPRNASTPVHFGGQQNGFEQLAQSMQSSPAGDGNGTMSGFSSVAPSRPSSPPMSKQGSTTNLQAAAGNGNDGNAPTTCTNCFTQTTPLWRRNPEGQPLCNACGLFLKLHGVVRPLSLKTDVIKKRNRGSGTNVPVGGSSTRSKKTASTLNSRKNSTLSMSTATANSTKPNSSNPTPRVTTPPATSQPPSSKDVDSPVSGTTSGANTAGSTPNSHFGGPGPSSGAVGGKGVVPIAAAPPKTSPGPGASSMSMQRPATASSKRQRRHSKSIGGDVPVSMDIDSPDSTSSIDGPRPFGSSAGLSSLPGGMSASSFNLNQRPSTLGSATGMISMSGGQTSSLIGSSAGPQEWEWLTMSL.

Disordered stretches follow at residues isoleucine 39–alanine 61, histidine 146–serine 169, glutamine 262–threonine 307, serine 390–threonine 416, and aspartate 587–proline 691. Over residues alanine 42 to alanine 59 the composition is skewed to polar residues. Over residues histidine 146 to alanine 159 the composition is skewed to basic and acidic residues. 2 stretches are compositionally biased toward polar residues: residues glutamine 262–asparagine 274 and phenylalanine 297–threonine 307. Low complexity predominate over residues serine 390–serine 400. Composition is skewed to polar residues over residues leucine 597–arginine 606 and asparagine 632–proline 645. Low complexity-rich tracts occupy residues serine 654–arginine 663 and alanine 680–proline 691. The segment at cysteine 694 to cysteine 718 adopts a GATA-type zinc-finger fold. Positions asparagine 742–serine 918 are disordered. Positions glycine 744–valine 794 are enriched in polar residues. The segment covering threonine 796–threonine 826 has biased composition (low complexity). The span at glycine 832 to glycine 845 shows a compositional bias: gly residues. Positions serine 863–serine 875 are enriched in polar residues. Residues serine 892–serine 918 are compositionally biased toward low complexity.

Its subcellular location is the nucleus. Major nitrogen regulatory protein. Positively acting regulatory gene of nitrogen metabolite repression. The sequence is that of Nitrogen regulatory protein areA (AREA) from Fusarium fujikuroi (Bakanae and foot rot disease fungus).